Consider the following 336-residue polypeptide: MIEADRLISAASNQPEDVVDRAIRPKLLEEYIGQPQVRSQMEIFIQAAKLRGEALDHLLIFGPPGLGKTTLANIVANEMGVNLRTTSGPVLEKAGDLAAMLTNLEPHDVLFIDEIHRLSPVVEEVLYPAMEDYQLDIMIGEGPAARSIKIDLPPFTLIGATTRAGSLTSPLRDRFGIVQRLEFYQVPDLQYIVGRSARFMGLELSDEGAFEVAKRSRGTPRIANRLLRRVRDFAEVKHDGTISLDVAAQALDMLNVDAEGFDYMDRKLLLAILDKFFGGPVGLDNLAAAIGEERETIEDVLEPYLIQQGFLQRTPRGRMATVRAWNHFGITPPEMP.

A large ATPase domain (RuvB-L) region spans residues 4 to 184; sequence ADRLISAASN…FGIVQRLEFY (181 aa). Residues Ile23, Arg24, Gly65, Lys68, Thr69, Thr70, 131–133, Arg174, Tyr184, and Arg221 contribute to the ATP site; that span reads EDY. Thr69 provides a ligand contact to Mg(2+). The segment at 185–255 is small ATPAse domain (RuvB-S); sequence QVPDLQYIVG…VAAQALDMLN (71 aa). Residues 258 to 336 are head domain (RuvB-H); that stretch reads AEGFDYMDRK…HFGITPPEMP (79 aa). Arg294, Arg313, and Arg318 together coordinate DNA.

This sequence belongs to the RuvB family. Homohexamer. Forms an RuvA(8)-RuvB(12)-Holliday junction (HJ) complex. HJ DNA is sandwiched between 2 RuvA tetramers; dsDNA enters through RuvA and exits via RuvB. An RuvB hexamer assembles on each DNA strand where it exits the tetramer. Each RuvB hexamer is contacted by two RuvA subunits (via domain III) on 2 adjacent RuvB subunits; this complex drives branch migration. In the full resolvosome a probable DNA-RuvA(4)-RuvB(12)-RuvC(2) complex forms which resolves the HJ.

The protein localises to the cytoplasm. The enzyme catalyses ATP + H2O = ADP + phosphate + H(+). Its function is as follows. The RuvA-RuvB-RuvC complex processes Holliday junction (HJ) DNA during genetic recombination and DNA repair, while the RuvA-RuvB complex plays an important role in the rescue of blocked DNA replication forks via replication fork reversal (RFR). RuvA specifically binds to HJ cruciform DNA, conferring on it an open structure. The RuvB hexamer acts as an ATP-dependent pump, pulling dsDNA into and through the RuvAB complex. RuvB forms 2 homohexamers on either side of HJ DNA bound by 1 or 2 RuvA tetramers; 4 subunits per hexamer contact DNA at a time. Coordinated motions by a converter formed by DNA-disengaged RuvB subunits stimulates ATP hydrolysis and nucleotide exchange. Immobilization of the converter enables RuvB to convert the ATP-contained energy into a lever motion, pulling 2 nucleotides of DNA out of the RuvA tetramer per ATP hydrolyzed, thus driving DNA branch migration. The RuvB motors rotate together with the DNA substrate, which together with the progressing nucleotide cycle form the mechanistic basis for DNA recombination by continuous HJ branch migration. Branch migration allows RuvC to scan DNA until it finds its consensus sequence, where it cleaves and resolves cruciform DNA. The sequence is that of Holliday junction branch migration complex subunit RuvB from Enterobacter sp. (strain 638).